A 151-amino-acid chain; its full sequence is Cytochrome c-type biogenesis protein CcmE (151 aa).

Residues 1-8 are Cytoplasmic-facing; the sequence is MNPLRKKR. A helical; Signal-anchor for type II membrane protein transmembrane segment spans residues 9–29; it reads LLIILAILVGVGIAVGLALSA. Over 30 to 151 the chain is Periplasmic; the sequence is LKENINLFYT…QSAPTPAKEG (122 aa). Heme-binding residues include H124 and Y128. A disordered region spans residues 131–151; it reads PEVTKALKDSGQSAPTPAKEG.

It belongs to the CcmE/CycJ family.

Its subcellular location is the cell inner membrane. Functionally, heme chaperone required for the biogenesis of c-type cytochromes. Transiently binds heme delivered by CcmC and transfers the heme to apo-cytochromes in a process facilitated by CcmF and CcmH. In Pseudomonas fluorescens (strain ATCC BAA-477 / NRRL B-23932 / Pf-5), this protein is Cytochrome c-type biogenesis protein CcmE.